Consider the following 261-residue polypeptide: Thiamine thiazole synthase (261 aa).

Residues Ala33, 52–53 (ER), Gly60, Val124, and 152–154 (HVD) contribute to the NAD(+) site. The Fe cation site is built by Asp154 and His169. Ile219 serves as a coordination point for NAD(+). Arg229 is a glycine binding site.

It belongs to the THI4 family. In terms of assembly, homooctamer; tetramer of dimers. Fe(2+) is required as a cofactor.

The catalysed reaction is hydrogen sulfide + glycine + NAD(+) = ADP-5-ethyl-4-methylthiazole-2-carboxylate + nicotinamide + 3 H2O + H(+). Its pathway is cofactor biosynthesis; thiamine diphosphate biosynthesis. Involved in the biosynthesis of the thiazole moiety of thiamine. Catalyzes the conversion of NAD and glycine to adenosine diphosphate 5-(2-hydroxyethyl)-4-methylthiazole-2-carboxylate (ADT), an adenylated thiazole intermediate, using free sulfide as a source of sulfur. This Pyrobaculum calidifontis (strain DSM 21063 / JCM 11548 / VA1) protein is Thiamine thiazole synthase.